A 330-amino-acid chain; its full sequence is Aspartate--ammonia ligase (330 aa).

It belongs to the class-II aminoacyl-tRNA synthetase family. AsnA subfamily.

It is found in the cytoplasm. It carries out the reaction L-aspartate + NH4(+) + ATP = L-asparagine + AMP + diphosphate + H(+). It participates in amino-acid biosynthesis; L-asparagine biosynthesis; L-asparagine from L-aspartate (ammonia route): step 1/1. In Shigella sonnei (strain Ss046), this protein is Aspartate--ammonia ligase.